The primary structure comprises 359 residues: S-adenosylmethionine:tRNA ribosyltransferase-isomerase (359 aa).

Belongs to the QueA family. As to quaternary structure, monomer.

It is found in the cytoplasm. The enzyme catalyses 7-aminomethyl-7-carbaguanosine(34) in tRNA + S-adenosyl-L-methionine = epoxyqueuosine(34) in tRNA + adenine + L-methionine + 2 H(+). Its pathway is tRNA modification; tRNA-queuosine biosynthesis. Functionally, transfers and isomerizes the ribose moiety from AdoMet to the 7-aminomethyl group of 7-deazaguanine (preQ1-tRNA) to give epoxyqueuosine (oQ-tRNA). The polypeptide is S-adenosylmethionine:tRNA ribosyltransferase-isomerase (Colwellia psychrerythraea (strain 34H / ATCC BAA-681) (Vibrio psychroerythus)).